The sequence spans 228 residues: Endonuclease V (228 aa).

Mg(2+)-binding residues include aspartate 36 and aspartate 104.

The protein belongs to the endonuclease V family. Mg(2+) is required as a cofactor.

The protein localises to the cytoplasm. It catalyses the reaction Endonucleolytic cleavage at apurinic or apyrimidinic sites to products with a 5'-phosphate.. Functionally, DNA repair enzyme involved in the repair of deaminated bases. Selectively cleaves double-stranded DNA at the second phosphodiester bond 3' to a deoxyinosine leaving behind the intact lesion on the nicked DNA. The protein is Endonuclease V of Serratia proteamaculans (strain 568).